Here is a 227-residue protein sequence, read N- to C-terminus: Small ribosomal subunit protein uS3 (227 aa).

The KH type-2 domain occupies 39–109; sequence IHRFFEKLTR…KIVINVDAVD (71 aa).

The protein belongs to the universal ribosomal protein uS3 family. As to quaternary structure, part of the 30S ribosomal subunit. Forms a tight complex with proteins S10 and S14.

Binds the lower part of the 30S subunit head. Binds mRNA in the 70S ribosome, positioning it for translation. This is Small ribosomal subunit protein uS3 from Mesomycoplasma hyopneumoniae (strain 232) (Mycoplasma hyopneumoniae).